Consider the following 132-residue polypeptide: Pro-MCH 2 (132 aa).

The signal sequence occupies residues 1–24 (MRDSVLSVIFALALFLECYTPSMA). Cysteines 120 and 129 form a disulfide.

It belongs to the melanin-concentrating hormone family. As to expression, pituitary gland. Produced in neurons of lateral basal hypothalamus which project both to the brain and to the neural lobe of the pituitary gland from where MCH is released.

Its function is as follows. Plays a role in skin pigmentation by antagonizing the action of melanotropin alpha. Induces melanin concentration within the melanophores. May participate in the control of the hypothalamo-pituitary adrenal gland axis by inhibiting the release of ACTH. The sequence is that of Pro-MCH 2 (mch2) from Oncorhynchus keta (Chum salmon).